A 558-amino-acid chain; its full sequence is MFLEAVYHRPRKNWSYAYNGTTVHLRIRTKKDDMTAVYALAGDKYMWDHTMEYVPMTKLATDELFDYWECEVTPPYRRVKYGFLLQQGHEKRWMTEYDFLTEPPRNPDRLFEYPFINPVDVFQPPAWVKDAIFYQIFPERFANGDTRNDPEGTLPWGSADPTPSCFFGGDLQGVIDHLDHLSKLGVNAVYFTPLFKATTNHKYDTEDYFQIDPQFGDKDTLKKLVDLCHERGIRVLLDAVFNHSGRTFPPFVDVLKNGEKSKYKDWFHIRSLPLEVVDGIPTYDTFAFEPLMPKLNTEHPDVKEYLLKAAEYWIRETGIDGWRLDVANEVSHQFWREFRRVVKQANPDAYILGEVWHESSIWLEGDQFDAVMNYPFTNAVLDFFIHQIADAEKFSFMLGKQLAGYPRQASEVMFNLLDSHDTARLLTQADGDKRKMKLAVLFQFTYFGTPCIYYGDEVGLDGGHDPGCRKCMEWDETKHDKDLFAFYQTVIRLRQAHAALRTGTFKFLTAEKNSRQIAYLREDDQDTILVVMNNDKAGHTLRCLSGMHSGPICGTTMS.

Residues asparagine 143, glycine 168, and aspartate 170 each coordinate Ca(2+). Residues histidine 243 and arginine 323 each contribute to the substrate site. The Nucleophile role is filled by aspartate 325. Residue glutamate 354 is the Proton donor of the active site. Substrate contacts are provided by residues 420–421 (HD), aspartate 465, and arginine 469.

This sequence belongs to the glycosyl hydrolase 13 family. In terms of assembly, monomer. Depending on the pH of the solution, exists as a monomer, a homodimer or as an assembly of six homodimers forming a dodecamer, which is catalytically the most efficient form of the enzyme. The cofactor is Ca(2+).

It catalyses the reaction cyclomaltodextrin + H2O = linear maltodextrin. It carries out the reaction Hydrolysis of pullulan to panose (6-alpha-D-glucosylmaltose).. Its activity is regulated as follows. Hydrolysis of beta-cyclodextrin is inhibited by Cu(2+), Zn(2+) and Ag(+), and activated by Ca(2+), EGTA and EDTA. Activity is increased over twofold in the presence of 5 mM EDTA. Competitively inhibited by acarbose and methyl 6-amino-6-deoxy-alpha-D-glucopyranoside by reducing the rate of the ring opening step of the reaction. Its function is as follows. Hydrolyzes alpha-, beta- and gamma-cyclodextrins and the resulting linear maltodextrins, with the highest activity with beta-cyclodextrin (cyclomaltoheptaose). Soluble starch is hydrolyzed slowly, but it is nevertheless preferred over pullulan as a substrate. Is able to hydrolyze amylose and amylopectin, with a very strong preference for amylose, with maltose and glucose as the main products. Maltose and glucose are the main hydrolysis products of cyclomaltodextrins, maltodextrins and starch, whereas panose is the main hydrolysis product of pullulan. Acarbose is partially hydrolyzed to glucose and pseudotrisaccharide. No activity with maltose as substrate. Has transglycosylating activity with high concentrations of maltotriose, maltotetraose and starch. The protein is Cyclomaltodextrinase of Bacillus sp.